The primary structure comprises 566 residues: Arginine--tRNA ligase (566 aa).

Positions 121–131 match the 'HIGH' region motif; the sequence is ANPNGPFHIGH.

The protein belongs to the class-I aminoacyl-tRNA synthetase family.

The protein localises to the cytoplasm. It catalyses the reaction tRNA(Arg) + L-arginine + ATP = L-arginyl-tRNA(Arg) + AMP + diphosphate. This is Arginine--tRNA ligase from Methanococcus maripaludis (strain DSM 14266 / JCM 13030 / NBRC 101832 / S2 / LL).